Here is a 164-residue protein sequence, read N- to C-terminus: UPF0114 protein YqhA (164 aa).

The next 3 helical transmembrane spans lie at 10–32 (YASR…ALAL), 53–75 (LILV…MVMF), and 136–155 (LMWY…VMGY).

This sequence belongs to the UPF0114 family.

The protein localises to the cell membrane. The chain is UPF0114 protein YqhA from Salmonella typhi.